The following is a 2342-amino-acid chain: Outer kinetochore KNL1 complex subunit KNL1 (2342 aa).

Residues 1-56 (MDGVSSEANEENDNIERPVRRRHSSILKPPRSPLQDLRGGNERVQESNALRNKKNS) form a disordered region. Positions 1–250 (MDGVSSEANE…FNDFIKRLKT (250 aa)) are may mediate oligomerization. The tract at residues 1–728 (MDGVSSEANE…QSLFSTTKPL (728 aa)) is interaction with BUB1 and BUB1B. 2 interaction with microtubules regions span residues 17-34 (RPVRRRHSSILKPPRSPL) and 53-80 (KKNSRRVSFADTIKVFQTESHMKIVRKS). The interaction with PP1CA; contains the protein phosphatase 1 (PP1) interaction motifs SILK, RVXF and phi-phi stretch occupies residues 23 to 80 (HSSILKPPRSPLQDLRGGNERVQESNALRNKKNSRRVSFADTIKVFQTESHMKIVRKS). Serine 24 bears the Phosphoserine; by AURKB mark. Position 32 is a phosphoserine (serine 32). The residue at position 60 (serine 60) is a Phosphoserine; by AURKB. The segment at 174–190 (ENQMDLTSSHTVMITKG) is interaction with BUB1. An interaction with BUB1B region spans residues 210–226 (ANLKLHTEDSRMKKEVN). Phosphothreonine is present on threonine 539. A phosphoserine mark is found at serine 578 and serine 584. Threonine 586 is modified (phosphothreonine). Positions 620 to 646 (APESTSESHSQSKSSSDECEEITKSRN) are disordered. Residues 622-633 (ESTSESHSQSKS) show a composition bias toward low complexity. Residue serine 767 is modified to Phosphoserine. Residues 855-1201 (EDESVQKPKF…VTDSHTVFID (347 aa)) form a 2 X 104 AA approximate repeats region. Repeat 1 spans residues 885-989 (DKTIVFSEDD…MTESHTVFID (105 aa)). At threonine 901 the chain carries Phosphothreonine. Residues serine 956, serine 1039, serine 1076, and serine 1088 each carry the phosphoserine modification. Repeat unit 2 spans residues 1099-1201 (DKTIVFSENH…VTDSHTVFID (103 aa)). Serine 1448 is subject to Phosphoserine. A disordered region spans residues 1639 to 1662 (SNAKDSRDEENKKSHNGAETTSLP). Positions 1642–1651 (KDSRDEENKK) are enriched in basic and acidic residues. Phosphoserine occurs at positions 1675 and 1773. The short motif at 1789–1803 (TWVQEEEDIHKEKKI) is the Nuclear localization signal element. The residue at position 1831 (serine 1831) is a Phosphoserine. Residues serine 1831 and serine 1834 each carry the phosphoserine; by TTK modification. Serine 1845 and serine 1860 each carry phosphoserine. Positions 1981–2108 (KMRHCSDKEL…LLELEVQKEQ (128 aa)) are required for interaction with ZWINT. A coiled-coil region spans residues 2024–2133 (VQSAQNEREK…EELLDQLSLS (110 aa)). Residues 2091–2311 (EEEELQRNLL…GNTSQDDIAT (221 aa)) form an interaction with NSL1, DSN1 and required for assembly into the outer kinetochore region.

In terms of assembly, component of the KNL1 complex composed of KNL1 and ZWINT. Part of the ten-subunit outer kinetochore KMN network that includes the KNL1, MIS12 and NDC80 complexes; a bioriented kinetochore contains approximately 150 copies of the network. Interacts (via C-terminus) with the MIS12 complex subunits NSL1 (via C-terminus), PMF1 and DSN1; the interaction is direct. Interacts (via N-terminal region) with BUB1B (via BUB1 N-terminal domain); the interaction is direct and is required for cell cycle arrest upon activation of the mitotic spindle assembly checkpoint. Interacts (via N-terminal region) with BUB1 (via BUB1 N-terminal domain); the interaction is direct. Interacts with the protein phosphatase PP1 subunit PPP1CA; the interaction is direct and mutually exclusive with binding to microtubules. Interacts with the protein phosphatase PP1 subunit PPP1CC; the interaction is direct and mutually exclusive with binding to microtubules. In terms of processing, phosphorylation by AURKB negatively regulates its interaction with protein phosphatase 1 (PP1) subunit PPP1CA and with microtubules. As to expression, highly expressed in testis, where it is localized in germ cells, in particular in spermatocytes and in the pre-acrosome of round spermatids. Detected in the acrosome of ejaculated spermatozoa. Detected in adult thymus, bone marrow, colon, small intestine, appendix and placenta, and in fetal liver and thymus.

The protein resides in the nucleus. It localises to the chromosome. It is found in the centromere. The protein localises to the kinetochore. Its subcellular location is the cytoplasm. Functionally, acts as a component of the outer kinetochore KNL1 complex that serves as a docking point for spindle assembly checkpoint components and mediates microtubule-kinetochore interactions. Kinetochores, consisting of a centromere-associated inner segment and a microtubule-contacting outer segment, play a crucial role in chromosome segregation by mediating the physical connection between centromeric DNA and spindle microtubules. The outer kinetochore is made up of the ten-subunit KMN network, comprising the MIS12, NDC80 and KNL1 complexes, and auxiliary microtubule-associated components; together they connect the outer kinetochore with the inner kinetochore, bind microtubules, and mediate interactions with mitotic checkpoint proteins that delay anaphase until chromosomes are bioriented on the spindle. Required for kinetochore binding by a distinct subset of kMAPs (kinetochore-bound microtubule-associated proteins) and motors. Acts in coordination with CENPK to recruit the NDC80 complex to the outer kinetochore. Can bind either to microtubules or to the protein phosphatase 1 (PP1) catalytic subunits PPP1CA and PPP1CC (via overlapping binding sites), it has higher affinity for PP1. Recruits MAD2L1 to the kinetochore and also directly links BUB1 and BUB1B to the kinetochore. In addition to orienting mitotic chromosomes, it is also essential for alignment of homologous chromosomes during meiotic metaphase I. In meiosis I, required to activate the spindle assembly checkpoint at unattached kinetochores to correct erroneous kinetochore-microtubule attachments. This is Outer kinetochore KNL1 complex subunit KNL1 from Homo sapiens (Human).